An 88-amino-acid chain; its full sequence is Yop proteins translocation protein S (88 aa).

2 helical membrane-spanning segments follow: residues 15–35 (WLVL…GTLV) and 49–69 (LGFV…ASWL).

This sequence belongs to the FliQ/MopD/SpaQ family.

It is found in the cell membrane. Functionally, component of the Yop secretion machinery. The polypeptide is Yop proteins translocation protein S (yscS) (Yersinia pestis).